Reading from the N-terminus, the 200-residue chain is Protein GrpE (200 aa).

Positions 1–11 are enriched in polar residues; sequence MSNQTNKAQDN. Residues 1-29 are disordered; sequence MSNQTNKAQDNQVEEIVEGELLNENGTEA.

The protein belongs to the GrpE family. In terms of assembly, homodimer.

Its subcellular location is the cytoplasm. In terms of biological role, participates actively in the response to hyperosmotic and heat shock by preventing the aggregation of stress-denatured proteins, in association with DnaK and GrpE. It is the nucleotide exchange factor for DnaK and may function as a thermosensor. Unfolded proteins bind initially to DnaJ; upon interaction with the DnaJ-bound protein, DnaK hydrolyzes its bound ATP, resulting in the formation of a stable complex. GrpE releases ADP from DnaK; ATP binding to DnaK triggers the release of the substrate protein, thus completing the reaction cycle. Several rounds of ATP-dependent interactions between DnaJ, DnaK and GrpE are required for fully efficient folding. The protein is Protein GrpE of Shewanella halifaxensis (strain HAW-EB4).